Consider the following 475-residue polypeptide: UDP-glycosyltransferase 1 (475 aa).

His15 serves as the catalytic Proton acceptor. An anthocyanidin is bound at residue His15. Asp117 serves as the catalytic Charge relay. Positions 345, 347, 362, 365, 366, 367, and 370 each coordinate UDP-alpha-D-glucose. Gly385 contacts an anthocyanidin. 2 residues coordinate UDP-alpha-D-glucose: Glu386 and Gln387.

The protein belongs to the UDP-glycosyltransferase family. As to expression, mostly expressed in leaves and flowers, and, to a lower extent, in roots and stems.

The catalysed reaction is (20S)-protopanaxadiol + UDP-alpha-D-glucose = (20S)-ginsenoside C-K + UDP + H(+). It carries out the reaction (20S)-ginsenoside Rg3 + UDP-alpha-D-glucose = (20S)-ginsenoside Rd + UDP + H(+). The enzyme catalyses (20S)-ginsenoside Rh2 + UDP-alpha-D-glucose = (20S)-ginsenoside F2 + UDP + H(+). It catalyses the reaction (20S)-protopanaxatriol + UDP-alpha-D-glucose = (20S)-ginsenoside F1 + UDP + H(+). The catalysed reaction is dammarenediol-II + UDP-alpha-D-glucose = (20S)-20-O-(beta-D-glucosyl)-3-hydroxydammarene + UDP + H(+). Its pathway is secondary metabolite biosynthesis; terpenoid biosynthesis. Component of the dammarane-type triterpene saponins (e.g. ginsenosides or panaxosides) biosynthetic pathway. Glycosyltransferase that catalyzes the biosynthesis of ginsenoside F1 from protopanaxatriol (PPT). Triggers C20-OH glycosylation of ginsenoside Rg3 to produce ginsenoside Rd. Mediates the conversion of protopanaxadiol (PPD) to the ginsenoside compound K. catalyzes the production of 20S-O-beta-(D-glucosyl)-dammarenediol II form dammarenediol II (DM). In Panax ginseng (Korean ginseng), this protein is UDP-glycosyltransferase 1.